The sequence spans 862 residues: Valine--tRNA ligase (862 aa).

Residues 44 to 53 (NVTGSLHMGH) carry the 'HIGH' region motif. 8 residues coordinate Zn(2+): Cys-176, Cys-179, Cys-344, Cys-347, Cys-417, Cys-420, Cys-438, and Cys-441. Residues 528–532 (KMSKS) carry the 'KMSKS' region motif. Residue Lys-531 coordinates ATP. A coiled-coil region spans residues 802–862 (RRRQEKRLKE…RIREALSQIG (61 aa)).

It belongs to the class-I aminoacyl-tRNA synthetase family. ValS type 1 subfamily. As to quaternary structure, monomer. Zn(2+) is required as a cofactor.

It localises to the cytoplasm. It carries out the reaction tRNA(Val) + L-valine + ATP = L-valyl-tRNA(Val) + AMP + diphosphate. In terms of biological role, catalyzes the attachment of valine to tRNA(Val). As ValRS can inadvertently accommodate and process structurally similar amino acids such as threonine, to avoid such errors, it has a 'posttransfer' editing activity that hydrolyzes mischarged Thr-tRNA(Val) in a tRNA-dependent manner. The polypeptide is Valine--tRNA ligase (Thermus thermophilus (strain ATCC 27634 / DSM 579 / HB8)).